The sequence spans 315 residues: MKLLAIKVECSYELEDGLSFFMQDELDAQGIESRKRSDFVLEGQKHDSSLVELDDIENLPEDLELTAYFEYKNADKKKIIQKITDKIAEMKGYGLDAGNVSISTKEVADEDWNTAWQKYYHVIDFSRHLAIVPEWEDYQPAFSDQQLIRLDPGLAFGTGGHTTTQLVLLAMERALVKPMSVLDVGTGSGILAIAASKLGASHVLGTDISDEAVTAAKENIALNNIDNIDVRKANLLKDIDEKYDLIVANILADILLELIPDLDNHLNENGKIIFSGIDYLQLPKIEKALEENNFVIKMKMQEGRWIGLLIARKPN.

Residues T164, G185, D207, and N249 each coordinate S-adenosyl-L-methionine.

It belongs to the methyltransferase superfamily. PrmA family.

The protein resides in the cytoplasm. It catalyses the reaction L-lysyl-[protein] + 3 S-adenosyl-L-methionine = N(6),N(6),N(6)-trimethyl-L-lysyl-[protein] + 3 S-adenosyl-L-homocysteine + 3 H(+). In terms of biological role, methylates ribosomal protein L11. In Lactobacillus johnsonii (strain CNCM I-12250 / La1 / NCC 533), this protein is Ribosomal protein L11 methyltransferase.